We begin with the raw amino-acid sequence, 145 residues long: ATP synthase epsilon chain (145 aa).

Belongs to the ATPase epsilon chain family. In terms of assembly, F-type ATPases have 2 components, CF(1) - the catalytic core - and CF(0) - the membrane proton channel. CF(1) has five subunits: alpha(3), beta(3), gamma(1), delta(1), epsilon(1). CF(0) has three main subunits: a, b and c.

It is found in the cell inner membrane. Its function is as follows. Produces ATP from ADP in the presence of a proton gradient across the membrane. In Francisella tularensis subsp. tularensis (strain FSC 198), this protein is ATP synthase epsilon chain.